The chain runs to 1538 residues: Phenolphthiocerol/phthiocerol polyketide synthase subunit B (1538 aa).

The 423-residue stretch at 33–455 (AEPVAVVGIG…GTNAHVIIEQ (423 aa)) folds into the Ketosynthase family 3 (KS3) domain. Catalysis depends on for beta-ketoacyl synthase activity residues cysteine 205, histidine 340, and histidine 377. The acyltransferase stretch occupies residues 553 to 882 (DGSPGPGTVF…TNLYTADIAH (330 aa)). Serine 649 serves as the catalytic For malonyltransferase activity. 1153 to 1196 (SQLVIGATGNIGPHLIRQLARMGAKTIVAMARKPGALDELTQCL) lines the NADP(+) pocket. The beta-ketoacyl reductase stretch occupies residues 1153 to 1328 (SQLVIGATGN…TVVDWGLWKS (176 aa)). The Carrier domain occupies 1423–1498 (DMLFDHVGAL…SLTDYLATVL (76 aa)). At serine 1458 the chain carries O-(pantetheine 4'-phosphoryl)serine.

It depends on NADP(+) as a cofactor. The cofactor is pantetheine 4'-phosphate.

It carries out the reaction icosanoyl-[(phenol)carboxyphthiodiolenone synthase] + 2 (S)-methylmalonyl-CoA + 3 malonyl-CoA + 5 NADPH + 10 H(+) = C32-carboxyphthiodiolenone-[(phenol)carboxyphthiodiolenone synthase] + 5 CO2 + 5 NADP(+) + 5 CoA + 2 H2O. It catalyses the reaction docosanoyl-[(phenol)carboxyphthiodiolenone synthase] + 2 (S)-methylmalonyl-CoA + 3 malonyl-CoA + 5 NADPH + 10 H(+) = C34-carboxyphthiodiolenone-[(phenol)carboxyphthiodiolenone synthase] + 5 CO2 + 5 NADP(+) + 5 CoA + 2 H2O. The enzyme catalyses 17-(4-hydroxyphenyl)heptadecanoyl-[(phenol)carboxyphthiodiolenone synthase] + 2 (S)-methylmalonyl-CoA + 3 malonyl-CoA + 5 NADPH + 10 H(+) = C35-(phenol)carboxyphthiodiolenone-[(phenol)carboxyphthiodiolenone synthase] + 5 CO2 + 5 NADP(+) + 5 CoA + 2 H2O. The catalysed reaction is 19-(4-hydroxyphenyl)nonadecanoyl-[(phenol)carboxyphthiodiolenone synthase] + 2 (S)-methylmalonyl-CoA + 3 malonyl-CoA + 5 NADPH + 10 H(+) = C37-(phenol)carboxyphthiodiolenone-[(phenol)carboxyphthiodiolenone synthase] + 5 CO2 + 5 NADP(+) + 5 CoA + 2 H2O. It functions in the pathway lipid metabolism; fatty acid biosynthesis. Part of the PpsABCDE complex involved in the biosynthesis of the lipid core common to phthiocerols and phenolphthiocerols by successive additions of malonyl-CoA or methylmalonyl-CoA extender units. PpsA can accept as substrate the activated forms of either icosanoyl (C20), docosanoyl (C22) or lignoceroyl (C24) groups from FadD26, or a (4-hydroxyphenyl)-C17 or (4-hydroxyphenyl)-C19 fatty acyl from FadD29. PpsA initiates the biosynthesis and extends its substrate using a malonyl-CoA extender unit. The PpsB and PpsC proteins add the second and third malonyl-CoA extender units. PpsD adds an (R)-methylmalonyl unit and PpsE adds a second (R)-methylmalonyl unit. The incorporation of the methylmalonyl units results in formation of two branched methyl groups in the elongated product. The chain is Phenolphthiocerol/phthiocerol polyketide synthase subunit B (ppsB) from Mycobacterium bovis (strain ATCC BAA-935 / AF2122/97).